A 236-amino-acid polypeptide reads, in one-letter code: Orotidine 5'-phosphate decarboxylase (236 aa).

Substrate is bound by residues Asp17, Lys39, Asp66–Thr75, Thr125, Arg187, Gln196, Gly216, and Arg217. Lys68 functions as the Proton donor in the catalytic mechanism.

The protein belongs to the OMP decarboxylase family. Type 1 subfamily. As to quaternary structure, homodimer.

It catalyses the reaction orotidine 5'-phosphate + H(+) = UMP + CO2. Its pathway is pyrimidine metabolism; UMP biosynthesis via de novo pathway; UMP from orotate: step 2/2. Functionally, catalyzes the decarboxylation of orotidine 5'-monophosphate (OMP) to uridine 5'-monophosphate (UMP). The sequence is that of Orotidine 5'-phosphate decarboxylase from Buchnera aphidicola subsp. Baizongia pistaciae (strain Bp).